Reading from the N-terminus, the 344-residue chain is Dihydroorotase (344 aa).

Positions 14 and 16 each coordinate Zn(2+). Substrate is bound by residues 16–18 (HLR) and asparagine 42. 3 residues coordinate Zn(2+): lysine 100, histidine 137, and histidine 175. At lysine 100 the chain carries N6-carboxylysine. Histidine 137 contacts substrate. Substrate is bound at residue leucine 220. Aspartate 248 contributes to the Zn(2+) binding site. Residue aspartate 248 is part of the active site. Substrate-binding residues include histidine 252 and alanine 264.

It belongs to the metallo-dependent hydrolases superfamily. DHOase family. Class II DHOase subfamily. In terms of assembly, homodimer. It depends on Zn(2+) as a cofactor.

The enzyme catalyses (S)-dihydroorotate + H2O = N-carbamoyl-L-aspartate + H(+). It participates in pyrimidine metabolism; UMP biosynthesis via de novo pathway; (S)-dihydroorotate from bicarbonate: step 3/3. In terms of biological role, catalyzes the reversible cyclization of carbamoyl aspartate to dihydroorotate. This is Dihydroorotase from Cupriavidus pinatubonensis (strain JMP 134 / LMG 1197) (Cupriavidus necator (strain JMP 134)).